The primary structure comprises 359 residues: Probable S-adenosylmethionine-dependent methyltransferase At5g38100 (359 aa).

Residues tyrosine 19, cysteine 63, asparagine 68, aspartate 104, serine 133, and phenylalanine 134 each contribute to the S-adenosyl-L-homocysteine site. Asparagine 172, aspartate 258, and phenylalanine 260 together coordinate Mg(2+).

The protein belongs to the methyltransferase superfamily. Type-7 methyltransferase family. Homodimer. Mg(2+) is required as a cofactor.

In Arabidopsis thaliana (Mouse-ear cress), this protein is Probable S-adenosylmethionine-dependent methyltransferase At5g38100.